A 589-amino-acid chain; its full sequence is Probable translation initiation factor IF-2 (589 aa).

A tr-type G domain is found at 14 to 229 (LRQPIVCVLG…LAGLAQRFLE (216 aa)). The tract at residues 23–30 (GHVDHGKT) is G1. 23 to 30 (GHVDHGKT) contacts GTP. A G2 region spans residues 48-52 (GITQR). Residues 84–87 (DTPG) are G3. GTP contacts are provided by residues 84–88 (DTPGH) and 138–141 (NKID). The segment at 138-141 (NKID) is G4. Residues 206–208 (SAK) form a G5 region.

Belongs to the TRAFAC class translation factor GTPase superfamily. Classic translation factor GTPase family. IF-2 subfamily.

In terms of biological role, function in general translation initiation by promoting the binding of the formylmethionine-tRNA to ribosomes. Seems to function along with eIF-2. The polypeptide is Probable translation initiation factor IF-2 (infB) (Thermoplasma acidophilum (strain ATCC 25905 / DSM 1728 / JCM 9062 / NBRC 15155 / AMRC-C165)).